Consider the following 661-residue polypeptide: Arginine--tRNA ligase, cytoplasmic (661 aa).

Residue Met1 is modified to N-acetylmethionine. A could be involved in the assembly of the multisynthetase complex region spans residues 1 to 73 (MDGLVAQCSA…AEKRRRPTKN (73 aa)). L-arginine contacts are provided by residues 201–203 (SPN), His212, Tyr385, Asp389, and Gln413. The 'HIGH' region signature appears at 202 to 213 (PNIAKEMHVGHL). The segment at 530-544 (NTAAYLLYAFTRIRS) is interaction with tRNA.

The protein belongs to the class-I aminoacyl-tRNA synthetase family. As to quaternary structure, interacts (via N-terminus) with AIMP1 (via N-terminus); this stimulates its catalytic activity. Interacts (via N-terminus) with LARS2 (via C-terminus). Monomer. Part of a multisubunit complex that groups tRNA ligases for Arg (RARS1), Asp (DARS1), Gln (QARS1), Ile (IARS1), Leu (LARS1), Lys (KARS1), Met (MARS1) the bifunctional ligase for Glu and Pro (EPRS1) and the auxiliary subunits AIMP1/p43, AIMP2/p38 and EEF1E1/p18. Interacts with QARS1. Part of a complex composed of RARS1, QARS1 and AIMP1.

It is found in the cytoplasm. The protein resides in the cytosol. It carries out the reaction tRNA(Arg) + L-arginine + ATP = L-arginyl-tRNA(Arg) + AMP + diphosphate. Forms part of a macromolecular complex that catalyzes the attachment of specific amino acids to cognate tRNAs during protein synthesis. Modulates the secretion of AIMP1 and may be involved in generation of the inflammatory cytokine EMAP2 from AIMP1. In Cricetulus griseus (Chinese hamster), this protein is Arginine--tRNA ligase, cytoplasmic (RARS1).